Consider the following 238-residue polypeptide: tRNA (guanine-N(7)-)-methyltransferase (238 aa).

4 residues coordinate S-adenosyl-L-methionine: Glu70, Asp95, Asp122, and Asp145. Residue Asp145 is part of the active site. Substrate contacts are provided by residues Lys149, Asp181, and 216–219; that span reads TKFE.

It belongs to the class I-like SAM-binding methyltransferase superfamily. TrmB family.

It catalyses the reaction guanosine(46) in tRNA + S-adenosyl-L-methionine = N(7)-methylguanosine(46) in tRNA + S-adenosyl-L-homocysteine. The protein operates within tRNA modification; N(7)-methylguanine-tRNA biosynthesis. Functionally, catalyzes the formation of N(7)-methylguanine at position 46 (m7G46) in tRNA. The sequence is that of tRNA (guanine-N(7)-)-methyltransferase from Neisseria meningitidis serogroup C / serotype 2a (strain ATCC 700532 / DSM 15464 / FAM18).